We begin with the raw amino-acid sequence, 312 residues long: Ribosomal protein L11 methyltransferase (312 aa).

Residues T162, G183, D205, and N248 each coordinate S-adenosyl-L-methionine.

It belongs to the methyltransferase superfamily. PrmA family.

It is found in the cytoplasm. It carries out the reaction L-lysyl-[protein] + 3 S-adenosyl-L-methionine = N(6),N(6),N(6)-trimethyl-L-lysyl-[protein] + 3 S-adenosyl-L-homocysteine + 3 H(+). In terms of biological role, methylates ribosomal protein L11. In Bacillus cytotoxicus (strain DSM 22905 / CIP 110041 / 391-98 / NVH 391-98), this protein is Ribosomal protein L11 methyltransferase.